Here is a 505-residue protein sequence, read N- to C-terminus: L-arabinose isomerase (505 aa).

Mn(2+) is bound by residues Glu-308, Glu-335, His-352, and His-453.

Belongs to the arabinose isomerase family. The cofactor is Mn(2+).

The enzyme catalyses beta-L-arabinopyranose = L-ribulose. It functions in the pathway carbohydrate degradation; L-arabinose degradation via L-ribulose; D-xylulose 5-phosphate from L-arabinose (bacterial route): step 1/3. In terms of biological role, catalyzes the conversion of L-arabinose to L-ribulose. The sequence is that of L-arabinose isomerase from Bifidobacterium animalis subsp. lactis (strain AD011).